The following is a 298-amino-acid chain: Apolipoprotein E (298 aa).

The signal sequence occupies residues 1–18; it reads MKILWAALVLTLLAGCRA. Tandem repeats lie at residues 74–95, 96–117, 118–139, 140–161, 162–183, and 223–244. An 8 X 22 AA approximate tandem repeats region spans residues 74–244; the sequence is LLMEDTMKEL…RLEEVREQME (171 aa). The residue at position 137 (Met137) is a Methionine sulfoxide. Ser141 is modified (phosphoserine). Positions 152–162 are LDL and other lipoprotein receptors binding; that stretch reads HLRKLRKRLQR. Residue 156 to 159 coordinates heparin; sequence LRKR. The lipid-binding and lipoprotein association stretch occupies residues 204–272; sequence ALTSHPLRER…SWFEPMVEDL (69 aa). Position 218–225 (218–225) interacts with heparin; it reads GEQVRGRL. The segment at 260 to 272 is specificity for association with VLDL; the sequence is RLKSWFEPMVEDL.

It belongs to the apolipoprotein A1/A4/E family. Homotetramer. May interact with ABCA1; functionally associated with ABCA1 in the biogenesis of HDLs. May interact with APP/A4 amyloid-beta peptide; the interaction is extremely stable in vitro but its physiological significance is unclear. May interact with MAPT. May interact with MAP2. In the cerebrospinal fluid, interacts with secreted SORL1. Interacts with PMEL; this allows the loading of PMEL luminal fragment on ILVs to induce fibril nucleation. Post-translationally, APOE exists as multiple glycosylated and sialylated glycoforms within cells and in plasma. The extent of glycosylation and sialylation are tissue and context specific. In terms of processing, glycated in plasma VLDL. Phosphorylated by FAM20C in the extracellular medium.

The protein localises to the secreted. Its subcellular location is the extracellular space. The protein resides in the extracellular matrix. It is found in the extracellular vesicle. It localises to the endosome. The protein localises to the multivesicular body. Functionally, APOE is an apolipoprotein, a protein associating with lipid particles, that mainly functions in lipoprotein-mediated lipid transport between organs via the plasma and interstitial fluids. APOE is a core component of plasma lipoproteins and is involved in their production, conversion and clearance. Apolipoproteins are amphipathic molecules that interact both with lipids of the lipoprotein particle core and the aqueous environment of the plasma. As such, APOE associates with chylomicrons, chylomicron remnants, very low density lipoproteins (VLDL) and intermediate density lipoproteins (IDL) but shows a preferential binding to high-density lipoproteins (HDL). It also binds a wide range of cellular receptors including the LDL receptor/LDLR, the LDL receptor-related proteins LRP1, LRP2 and LRP8 and the very low-density lipoprotein receptor/VLDLR that mediate the cellular uptake of the APOE-containing lipoprotein particles. Finally, APOE also has a heparin-binding activity and binds heparan-sulfate proteoglycans on the surface of cells, a property that supports the capture and the receptor-mediated uptake of APOE-containing lipoproteins by cells. A main function of APOE is to mediate lipoprotein clearance through the uptake of chylomicrons, VLDLs, and HDLs by hepatocytes. APOE is also involved in the biosynthesis by the liver of VLDLs as well as their uptake by peripheral tissues ensuring the delivery of triglycerides and energy storage in muscle, heart and adipose tissues. By participating in the lipoprotein-mediated distribution of lipids among tissues, APOE plays a critical role in plasma and tissues lipid homeostasis. APOE is also involved in two steps of reverse cholesterol transport, the HDLs-mediated transport of cholesterol from peripheral tissues to the liver, and thereby plays an important role in cholesterol homeostasis. First, it is functionally associated with ABCA1 in the biogenesis of HDLs in tissues. Second, it is enriched in circulating HDLs and mediates their uptake by hepatocytes. APOE also plays an important role in lipid transport in the central nervous system, regulating neuron survival and sprouting. This is Apolipoprotein E (APOE) from Hydrochoerus hydrochaeris (Capybara).